The sequence spans 184 residues: Helix-loop-helix protein ngn-1 (184 aa).

Positions 1–55 (MYHHSPFYPHHLQTGEQDLDMERENDMDQNSKNSTQKPVKREKRRYRCRKRSPAT) are disordered. Over residues 28 to 37 (DQNSKNSTQK) the composition is skewed to polar residues. The span at 38–52 (PVKREKRRYRCRKRS) shows a compositional bias: basic residues. The basic motif stretch occupies residues 62 to 75 (VRRDKANARERRRM). A bHLH domain is found at 62-114 (VRRDKANARERRRMNSLNDALEHLRGILPALPDEPKMTKIETLRKAQEYIASL). The helix-loop-helix motif stretch occupies residues 76–114 (NSLNDALEHLRGILPALPDEPKMTKIETLRKAQEYIASL). The tract at residues 164–184 (SNPPSQMYYHHHHQSPSFPHH) is disordered. Over residues 172-184 (YHHHHQSPSFPHH) the composition is skewed to basic residues.

Interacts with hlh-2; the interaction is direct.

Its subcellular location is the nucleus. Functionally, acts as a transcriptional regulator. Regulates expression of various genes, including homeobox protein unc-42 and helix-loop-helix protein hlh-34. Required for embryonic viability, neuromuscular development, organization of the nerve ring and neuronal cell body location. Regulates AIY neuron axon morphology and cell fate. Plays a role in cell autonomously establishing a neuronal left-right asymmetry. Involved in regulating glial specification. The sequence is that of Helix-loop-helix protein ngn-1 from Caenorhabditis elegans.